We begin with the raw amino-acid sequence, 898 residues long: Transportin-1 (898 aa).

HEAT repeat units follow at residues 19–46 (GLQQILQLLKESQSPDTTIQRTVQQKLE), 51–89 (YPDFNNYLIFVLTKLKSEDEPTRSLSGLILKNNVKAHFQ), 98–131 (FIKSECLNNIGDSSPLIRATVGILITTIASKGEL), 137–174 (LLPKLCSLLDSEDYNTCEGAFGALQKICEDSAEILDSD), 181–211 (NIMIPKFLQFFKHSSPKIRSHAVACVNQFII), 224–251 (FIENLFALAGDEEAEVRKNVCRALVMLL), 263–290 (HNIVEYMLQRTQDQDENVALEACEFWLT), 306–397 (PKLI…LANV), 405–433 (HILPLLKELLFHHEWVVKESGILVLGAIA), 445–472 (PELIPHLIQCLSDKKALVRSITCWTLSR), 486–519 (LKPLMTELLKRILDSNKRVQEAACSAFATLEEEA), 527–560 (LAYILDTLVFAFSKYQHKNLLILYDAIGTLADSV), 568–606 (EYIQMLMPPLIQKWNMLKDEDKDLFPLLECLSSVATALQ), 614–665 (EPVY…GLGG), 676–707 (ILTLMYQCMQDKMPEVRQSSFALLGDLTKACF), 715–748 (ADFMPILGTNLNPEFISVCNNATWAIGEISIQMG), 756–791 (PMVLHQLVEIINRPNTPKTLLENTAITIGRLGYVCP), 799–832 (QQFIRPWCTSLRNIRDNEEKDSAFRGICTMISVN), 841–872 (IFFCDAVASWINPKDDLRDMFCKILHGFKNQV), and 875–895 (ENWRRFSDQFPLPLKERLAAF). The Importin N-terminal domain maps to 41 to 109 (VQQKLEQLNQ…KSECLNNIGD (69 aa)). Positions 347–374 (FHRSRTVAQQHEEDGIEEEDDDDDEIDD) are disordered. The span at 360–374 (DGIEEEDDDDDEIDD) shows a compositional bias: acidic residues.

The protein belongs to the importin beta family. Importin beta-2 subfamily. Identified in a complex that contains TNPO1, RAN and RANBP1. Binds HNRPA1, HNRPA2, HNRNPDL, RPS7, RPL5 and RAN. Interacts with H2A, H2B, H3 and H4 histones. Interacts with isoform 1 and isoform 5 of ADAR/ADAR1 (via DRBM 3 domain). Interacts with SNAI1 (via zinc fingers); the interaction mediates SNAI1 nuclear import. Interacts with SNAI2 (via zinc fingers). Interacts with RPL23A (via BIB domain) and SRP19; this interaction is involved in RPL23A and SRP19 import into the nucleus. Interacts (via HEAT repeats 8-12) with BAP1 (via non-classical PY-NLS); this interaction is direct, is involved in BAP1 nuclear import and disrupts BAP1 homodimerization.

Its subcellular location is the cytoplasm. The protein localises to the nucleus. In terms of biological role, functions in nuclear protein import as nuclear transport receptor. Serves as receptor for nuclear localization signals (NLS) in cargo substrates. May mediate docking of the importin/substrate complex to the nuclear pore complex (NPC) through binding to nucleoporin and the complex is subsequently translocated through the pore by an energy requiring, Ran-dependent mechanism. At the nucleoplasmic side of the NPC, Ran binds to the importin, the importin/substrate complex dissociates and importin is re-exported from the nucleus to the cytoplasm where GTP hydrolysis releases Ran. The directionality of nuclear import is thought to be conferred by an asymmetric distribution of the GTP- and GDP-bound forms of Ran between the cytoplasm and nucleus. Involved in nuclear import of M9-containing proteins. In vitro, binds directly to the M9 region of the heterogeneous nuclear ribonucleoproteins (hnRNP), A1 and A2 and mediates their nuclear import. Involved in hnRNP A1/A2 nuclear export. Mediates the nuclear import of ribosomal proteins RPL23A, RPS7 and RPL5. In vitro, mediates nuclear import of SRP19. Mediates the import of histones H2A, H2B, H3 and H4. Mediates nuclear import of ADAR/ADAR1 in a RanGTP-dependent manner. Main mediator of PR-DUB complex component BAP1 nuclear import; acts redundantly with the karyopherins KPNA1 and KPNA2. The polypeptide is Transportin-1 (Tnpo1) (Mus musculus (Mouse)).